A 561-amino-acid polypeptide reads, in one-letter code: Malate synthase, glyoxysomal (561 aa).

The Proton acceptor role is filled by Arg-177. The Proton donor role is filled by Asp-462. A Microbody targeting signal motif is present at residues 559-561; sequence SRL.

Belongs to the malate synthase family.

The protein resides in the glyoxysome. The enzyme catalyses glyoxylate + acetyl-CoA + H2O = (S)-malate + CoA + H(+). It functions in the pathway carbohydrate metabolism; glyoxylate cycle; (S)-malate from isocitrate: step 2/2. This Brassica napus (Rape) protein is Malate synthase, glyoxysomal.